Consider the following 1244-residue polypeptide: Ras-specific guanine nucleotide-releasing factor 1 (1244 aa).

The region spanning 22 to 129 is the PH 1 domain; it reads DGTRKGYLSK…WVAAIARASY (108 aa). At Ser71 the chain carries Phosphoserine; by PLK2. The IQ domain maps to 204 to 229; sequence KKIKKVQSFLRGWLCRRKWKNIIQDY. A DH domain is found at 240 to 426; that stretch reads KRNQVVFSML…EELSRVMHDE (187 aa). In terms of domain architecture, PH 2 spans 456 to 582; it reads TFVRQGSLIQ…WTSDIIQCVD (127 aa). 2 positions are modified to phosphoserine; by PLK2: Ser575 and Ser611. Residues 629–743 enclose the N-terminal Ras-GEF domain; it reads KVLQIRYASV…RRRKLSLNIP (115 aa). The interval 707–730 is disordered; it reads GDAPKSPRASRKFSSPPPLAIGTS. Residue Ser739 is modified to Phosphoserine. Ser760 and Ser781 each carry phosphoserine; by PLK2. The interval 800–840 is disordered; sequence TLEESSGFRKPTSDILKEESDDDQSDVDDTEVSPPTPKSFR. The segment covering 818–830 has biased composition (acidic residues); the sequence is ESDDDQSDVDDTE. Ser854 is modified (phosphoserine; by PLK2). A Ras-GEF domain is found at 1009–1241; the sequence is SAMEIAEQLT…YEASLRIEPK (233 aa).

As to quaternary structure, homooligomer and heterooligomer with RASGRF2. Interacts with USP8, thereby regulating its stability. Post-translationally, phosphorylated by PLK2, leading to ubiquitination and degradation by the proteasome. In terms of processing, ubiquitinated and degraded following phosphorylation by PLK2. Phosphorylated by SRC and LCK. Phosphorylation by LCK increases its capacity to stimulate the GDP/GTP exchange on Ras, whereas its phosphorylation by SRC seems not to have an effect on stimulation activity.

Promotes the exchange of Ras-bound GDP by GTP. The chain is Ras-specific guanine nucleotide-releasing factor 1 (Rasgrf1) from Rattus norvegicus (Rat).